Consider the following 183-residue polypeptide: Large ribosomal subunit protein uL5 (183 aa).

The protein belongs to the universal ribosomal protein uL5 family. In terms of assembly, part of the 50S ribosomal subunit; part of the 5S rRNA/L5/L18/L25 subcomplex. Contacts the 5S rRNA and the P site tRNA. Forms a bridge to the 30S subunit in the 70S ribosome.

Functionally, this is one of the proteins that bind and probably mediate the attachment of the 5S RNA into the large ribosomal subunit, where it forms part of the central protuberance. In the 70S ribosome it contacts protein S13 of the 30S subunit (bridge B1b), connecting the 2 subunits; this bridge is implicated in subunit movement. Contacts the P site tRNA; the 5S rRNA and some of its associated proteins might help stabilize positioning of ribosome-bound tRNAs. The polypeptide is Large ribosomal subunit protein uL5 (Christiangramia forsetii (strain DSM 17595 / CGMCC 1.15422 / KT0803) (Gramella forsetii)).